A 370-amino-acid polypeptide reads, in one-letter code: (5-formylfuran-3-yl)methyl phosphate transaminase (370 aa).

Lysine 222 is modified (N6-(pyridoxal phosphate)lysine).

The protein belongs to the class-I pyridoxal-phosphate-dependent aminotransferase family. Homodimer. Pyridoxal 5'-phosphate serves as cofactor.

The protein resides in the cytoplasm. The enzyme catalyses 4-(hydroxymethyl)-2-furancarboxaldehyde phosphate + L-alanine = [5-(aminomethyl)-3-furyl]methyl phosphate + pyruvate. Its pathway is cofactor biosynthesis; methanofuran biosynthesis. Its function is as follows. Catalyzes the transamination reaction between 4-(hydroxymethyl)-2-furancarboxaldehyde phosphate (4-HFC-P) and alanine to produce pyruvate and 5-(aminomethyl)-3-furanmethanol phosphate (F1-P), the precursor for the furan moiety in methanofuran. The protein is (5-formylfuran-3-yl)methyl phosphate transaminase of Methanocaldococcus jannaschii (strain ATCC 43067 / DSM 2661 / JAL-1 / JCM 10045 / NBRC 100440) (Methanococcus jannaschii).